The following is a 955-amino-acid chain: Mediator of RNA polymerase II transcription subunit 16 (955 aa).

The interval 855-874 is disordered; the sequence is ALPETNANANANQNGKSSTQ. The segment covering 857–873 has biased composition (polar residues); sequence PETNANANANQNGKSST.

The protein belongs to the Mediator complex subunit 16 family. Component of the Mediator complex.

Its subcellular location is the nucleus. Component of the Mediator complex, a coactivator involved in the regulated transcription of nearly all RNA polymerase II-dependent genes. Mediator functions as a bridge to convey information from gene-specific regulatory proteins to the basal RNA polymerase II transcription machinery. Mediator is recruited to promoters by direct interactions with regulatory proteins and serves as a scaffold for the assembly of a functional preinitiation complex with RNA polymerase II and the general transcription factors. The polypeptide is Mediator of RNA polymerase II transcription subunit 16 (sin4) (Aspergillus fumigatus (strain ATCC MYA-4609 / CBS 101355 / FGSC A1100 / Af293) (Neosartorya fumigata)).